Reading from the N-terminus, the 472-residue chain is ATP synthase subunit beta (472 aa).

157-164 (GGAGVGKT) is a binding site for ATP.

Belongs to the ATPase alpha/beta chains family. In terms of assembly, F-type ATPases have 2 components, CF(1) - the catalytic core - and CF(0) - the membrane proton channel. CF(1) has five subunits: alpha(3), beta(3), gamma(1), delta(1), epsilon(1). CF(0) has three main subunits: a(1), b(2) and c(9-12). The alpha and beta chains form an alternating ring which encloses part of the gamma chain. CF(1) is attached to CF(0) by a central stalk formed by the gamma and epsilon chains, while a peripheral stalk is formed by the delta and b chains.

The protein localises to the cell membrane. The enzyme catalyses ATP + H2O + 4 H(+)(in) = ADP + phosphate + 5 H(+)(out). Produces ATP from ADP in the presence of a proton gradient across the membrane. The catalytic sites are hosted primarily by the beta subunits. This chain is ATP synthase subunit beta, found in Desulforudis audaxviator (strain MP104C).